The chain runs to 689 residues: Glycine--tRNA ligase beta subunit (689 aa).

The protein belongs to the class-II aminoacyl-tRNA synthetase family. In terms of assembly, tetramer of two alpha and two beta subunits.

It is found in the cytoplasm. It catalyses the reaction tRNA(Gly) + glycine + ATP = glycyl-tRNA(Gly) + AMP + diphosphate. The polypeptide is Glycine--tRNA ligase beta subunit (Shewanella halifaxensis (strain HAW-EB4)).